The primary structure comprises 137 residues: Nucleoside diphosphate kinase (137 aa).

ATP is bound by residues lysine 9, phenylalanine 57, arginine 85, threonine 91, arginine 102, and asparagine 112. Histidine 115 functions as the Pros-phosphohistidine intermediate in the catalytic mechanism.

Belongs to the NDK family. Homotetramer. Mg(2+) is required as a cofactor.

Its subcellular location is the cytoplasm. The enzyme catalyses a 2'-deoxyribonucleoside 5'-diphosphate + ATP = a 2'-deoxyribonucleoside 5'-triphosphate + ADP. The catalysed reaction is a ribonucleoside 5'-diphosphate + ATP = a ribonucleoside 5'-triphosphate + ADP. Its function is as follows. Major role in the synthesis of nucleoside triphosphates other than ATP. The ATP gamma phosphate is transferred to the NDP beta phosphate via a ping-pong mechanism, using a phosphorylated active-site intermediate. The protein is Nucleoside diphosphate kinase of Campylobacter jejuni subsp. jejuni serotype O:6 (strain 81116 / NCTC 11828).